Here is a 1435-residue protein sequence, read N- to C-terminus: Gag-Pol polyprotein (1435 aa).

Gly-2 is lipidated: N-myristoyl glycine; by host. Residues 7–31 form an interaction with Gp41 region; it reads VLSGGKLDKWEKIRLRPGGKKKYRL. The tract at residues 8 to 43 is interaction with host CALM1; sequence LSGGKLDKWEKIRLRPGGKKKYRLKHIVWASRELER. Residues 12–19 form an interaction with host AP3D1 region; it reads KLDKWEKI. The interval 14–33 is interaction with membrane phosphatidylinositol 4,5-bisphosphate and RNA; it reads DKWEKIRLRPGGKKKYRLKH. Positions 16 to 22 match the Nuclear export signal motif; that stretch reads WEKIRLR. Positions 26 to 32 match the Nuclear localization signal motif; that stretch reads KKKYRLK. The tract at residues 73–77 is interaction with membrane phosphatidylinositol 4,5-bisphosphate; sequence EELRS. Residues 102-128 form a disordered region; the sequence is EKMEEEQNKSKKKAQQAAADTGNNSQV. The residue at position 132 (Tyr-132) is a Phosphotyrosine; by host. Positions 189–227 are interaction with human PPIA/CYPA and NUP153; it reads NTVGGHQAAMQMLKETINEEAAEWDRLHPVHAGPIAPGQ. Positions 277–363 are dimerization/Multimerization of capsid protein p24; that stretch reads YSPVSILDIR…GGPSHKARVL (87 aa). 2 consecutive CCHC-type zinc fingers follow at residues 391–408 and 412–429; these read IKCFNCGKEGHIAKNCRA and KGCWRCGKEGHQLKDCTE. Residues 489–493 form a dimerization of protease region; the sequence is PQITL. The Peptidase A2 domain occupies 508–577; sequence KEALLDTGAD…TPVNIIGRNL (70 aa). Asp-513 (for protease activity; shared with dimeric partner) is an active-site residue. 2 dimerization of protease regions span residues 537–543 and 576–588; these read GIGGFIK and NLLTQIGCTLNFP. In terms of domain architecture, Reverse transcriptase spans 631–821; the sequence is EGKISRIGPE…PPFLWMGYEL (191 aa). Mg(2+) is bound by residues Asp-697, Asp-772, and Asp-773. The RT 'primer grip' stretch occupies residues 814 to 822; the sequence is FLWMGYELH. The Tryptophan repeat motif motif lies at 985–1001; it reads WETWWAEYWQATWIPEW. The 124-residue stretch at 1021–1144 folds into the RNase H type-1 domain; it reads IIGAETFYVD…VDKLVSQGIR (124 aa). Residues Asp-1030, Glu-1065, Asp-1085, and Asp-1136 each contribute to the Mg(2+) site. An Integrase-type zinc finger spans residues 1150 to 1191; the sequence is DGIDKAQEEHEKYHNNWRAMASDFNLPPVVAKEIVASCDKCQ. Zn(2+) contacts are provided by His-1159, His-1163, Cys-1187, and Cys-1190. In terms of domain architecture, Integrase catalytic spans 1201–1351; that stretch reads VDCSPGIWQL…SAGERIIDII (151 aa). Positions 1211, 1263, and 1299 each coordinate Mg(2+). A DNA-binding region (integrase-type) is located at residues 1370–1417; the sequence is FRVYYRDSRDPIWKGPAKLLWKGEGAVVIQDKSDIKVVPRRKVKIIRD.

As to quaternary structure, homotrimer; further assembles as hexamers of trimers. Interacts with gp41 (via C-terminus). Interacts with host CALM1; this interaction induces a conformational change in the Matrix protein, triggering exposure of the myristate group. Interacts with host AP3D1; this interaction allows the polyprotein trafficking to multivesicular bodies during virus assembly. Part of the pre-integration complex (PIC) which is composed of viral genome, matrix protein, Vpr and integrase. Homodimer; the homodimer further multimerizes as homohexamers or homopentamers. Interacts with human PPIA/CYPA; This interaction stabilizes the capsid. Interacts with human NUP153. Interacts with host PDZD8; this interaction stabilizes the capsid. Interacts with monkey TRIM5; this interaction destabilizes the capsid. In terms of assembly, homodimer, whose active site consists of two apposed aspartic acid residues. As to quaternary structure, heterodimer of p66 RT and p51 RT (RT p66/p51). Heterodimerization of RT is essential for DNA polymerase activity. The overall folding of the subdomains is similar in p66 RT and p51 RT but the spatial arrangements of the subdomains are dramatically different. Homotetramer; may further associate as a homohexadecamer. Part of the pre-integration complex (PIC) which is composed of viral genome, matrix protein, Vpr and integrase. Interacts with human SMARCB1/INI1 and human PSIP1/LEDGF isoform 1. Interacts with human KPNA3; this interaction might play a role in nuclear import of the pre-integration complex. Interacts with human NUP153; this interaction might play a role in nuclear import of the pre-integration complex. The cofactor is Mg(2+). Post-translationally, specific enzymatic cleavages by the viral protease yield mature proteins. The protease is released by autocatalytic cleavage. The polyprotein is cleaved during and after budding, this process is termed maturation. Proteolytic cleavage of p66 RT removes the RNase H domain to yield the p51 RT subunit. Nucleocapsid protein p7 might be further cleaved after virus entry. In terms of processing, tyrosine phosphorylated presumably in the virion by a host kinase. Phosphorylation is apparently not a major regulator of membrane association. Phosphorylated possibly by host MAPK1; this phosphorylation is necessary for Pin1-mediated virion uncoating. Post-translationally, methylated by host PRMT6, impairing its function by reducing RNA annealing and the initiation of reverse transcription.

It localises to the host cell membrane. The protein resides in the host endosome. It is found in the host multivesicular body. Its subcellular location is the virion membrane. The protein localises to the host nucleus. It localises to the host cytoplasm. The protein resides in the virion. The enzyme catalyses Specific for a P1 residue that is hydrophobic, and P1' variable, but often Pro.. It catalyses the reaction Endohydrolysis of RNA in RNA/DNA hybrids. Three different cleavage modes: 1. sequence-specific internal cleavage of RNA. Human immunodeficiency virus type 1 and Moloney murine leukemia virus enzymes prefer to cleave the RNA strand one nucleotide away from the RNA-DNA junction. 2. RNA 5'-end directed cleavage 13-19 nucleotides from the RNA end. 3. DNA 3'-end directed cleavage 15-20 nucleotides away from the primer terminus.. The catalysed reaction is 3'-end directed exonucleolytic cleavage of viral RNA-DNA hybrid.. It carries out the reaction DNA(n) + a 2'-deoxyribonucleoside 5'-triphosphate = DNA(n+1) + diphosphate. Its activity is regulated as follows. Protease: The viral protease is inhibited by many synthetic protease inhibitors (PIs), such as amprenavir, atazanavir, indinavir, loprinavir, nelfinavir, ritonavir and saquinavir. Use of protease inhibitors in tritherapy regimens permit more ambitious therapeutic strategies. Reverse transcriptase/ribonuclease H: RT can be inhibited either by nucleoside RT inhibitors (NRTIs) or by non nucleoside RT inhibitors (NNRTIs). NRTIs act as chain terminators, whereas NNRTIs inhibit DNA polymerization by binding a small hydrophobic pocket near the RT active site and inducing an allosteric change in this region. Classical NRTIs are abacavir, adefovir (PMEA), didanosine (ddI), lamivudine (3TC), stavudine (d4T), tenofovir (PMPA), zalcitabine (ddC), and zidovudine (AZT). Classical NNRTIs are atevirdine (BHAP U-87201E), delavirdine, efavirenz (DMP-266), emivirine (I-EBU), and nevirapine (BI-RG-587). The tritherapies used as a basic effective treatment of AIDS associate two NRTIs and one NNRTI. Functionally, mediates, with Gag polyprotein, the essential events in virion assembly, including binding the plasma membrane, making the protein-protein interactions necessary to create spherical particles, recruiting the viral Env proteins, and packaging the genomic RNA via direct interactions with the RNA packaging sequence (Psi). Gag-Pol polyprotein may regulate its own translation, by the binding genomic RNA in the 5'-UTR. At low concentration, the polyprotein would promote translation, whereas at high concentration, the polyprotein would encapsidate genomic RNA and then shut off translation. Its function is as follows. Targets the polyprotein to the plasma membrane via a multipartite membrane-binding signal, that includes its myristoylated N-terminus. Matrix protein is part of the pre-integration complex. Implicated in the release from host cell mediated by Vpu. Binds to RNA. In terms of biological role, forms the conical core that encapsulates the genomic RNA-nucleocapsid complex in the virion. Most core are conical, with only 7% tubular. The core is constituted by capsid protein hexamer subunits. The core is disassembled soon after virion entry. Host restriction factors such as TRIM5-alpha or TRIMCyp bind retroviral capsids and cause premature capsid disassembly, leading to blocks in reverse transcription. Capsid restriction by TRIM5 is one of the factors which restricts HIV-1 to the human species. Host PIN1 apparently facilitates the virion uncoating. On the other hand, interactions with PDZD8 or CYPA stabilize the capsid. Encapsulates and protects viral dimeric unspliced genomic RNA (gRNA). Binds these RNAs through its zinc fingers. Acts as a nucleic acid chaperone which is involved in rearangement of nucleic acid secondary structure during gRNA retrotranscription. Also facilitates template switch leading to recombination. As part of the polyprotein, participates in gRNA dimerization, packaging, tRNA incorporation and virion assembly. Functionally, aspartyl protease that mediates proteolytic cleavages of Gag and Gag-Pol polyproteins during or shortly after the release of the virion from the plasma membrane. Cleavages take place as an ordered, step-wise cascade to yield mature proteins. This process is called maturation. Displays maximal activity during the budding process just prior to particle release from the cell. Also cleaves Nef and Vif, probably concomitantly with viral structural proteins on maturation of virus particles. Hydrolyzes host EIF4GI and PABP1 in order to shut off the capped cellular mRNA translation. The resulting inhibition of cellular protein synthesis serves to ensure maximal viral gene expression and to evade host immune response. Also mediates cleavage of host YTHDF3. Mediates cleavage of host CARD8, thereby activating the CARD8 inflammasome, leading to the clearance of latent HIV-1 in patient CD4(+) T-cells after viral reactivation; in contrast, HIV-1 can evade CARD8-sensing when its protease remains inactive in infected cells prior to viral budding. Its function is as follows. Multifunctional enzyme that converts the viral RNA genome into dsDNA in the cytoplasm, shortly after virus entry into the cell. This enzyme displays a DNA polymerase activity that can copy either DNA or RNA templates, and a ribonuclease H (RNase H) activity that cleaves the RNA strand of RNA-DNA heteroduplexes in a partially processive 3' to 5' endonucleasic mode. Conversion of viral genomic RNA into dsDNA requires many steps. A tRNA(3)-Lys binds to the primer-binding site (PBS) situated at the 5'-end of the viral RNA. RT uses the 3' end of the tRNA primer to perform a short round of RNA-dependent minus-strand DNA synthesis. The reading proceeds through the U5 region and ends after the repeated (R) region which is present at both ends of viral RNA. The portion of the RNA-DNA heteroduplex is digested by the RNase H, resulting in a ssDNA product attached to the tRNA primer. This ssDNA/tRNA hybridizes with the identical R region situated at the 3' end of viral RNA. This template exchange, known as minus-strand DNA strong stop transfer, can be either intra- or intermolecular. RT uses the 3' end of this newly synthesized short ssDNA to perform the RNA-dependent minus-strand DNA synthesis of the whole template. RNase H digests the RNA template except for two polypurine tracts (PPTs) situated at the 5'-end and near the center of the genome. It is not clear if both polymerase and RNase H activities are simultaneous. RNase H probably can proceed both in a polymerase-dependent (RNA cut into small fragments by the same RT performing DNA synthesis) and a polymerase-independent mode (cleavage of remaining RNA fragments by free RTs). Secondly, RT performs DNA-directed plus-strand DNA synthesis using the PPTs that have not been removed by RNase H as primers. PPTs and tRNA primers are then removed by RNase H. The 3' and 5' ssDNA PBS regions hybridize to form a circular dsDNA intermediate. Strand displacement synthesis by RT to the PBS and PPT ends produces a blunt ended, linear dsDNA copy of the viral genome that includes long terminal repeats (LTRs) at both ends. In terms of biological role, catalyzes viral DNA integration into the host chromosome, by performing a series of DNA cutting and joining reactions. This enzyme activity takes place after virion entry into a cell and reverse transcription of the RNA genome in dsDNA. The first step in the integration process is 3' processing. This step requires a complex comprising the viral genome, matrix protein, Vpr and integrase. This complex is called the pre-integration complex (PIC). The integrase protein removes 2 nucleotides from each 3' end of the viral DNA, leaving recessed CA OH's at the 3' ends. In the second step, the PIC enters cell nucleus. This process is mediated through integrase and Vpr proteins, and allows the virus to infect a non dividing cell. This ability to enter the nucleus is specific of lentiviruses, other retroviruses cannot and rely on cell division to access cell chromosomes. In the third step, termed strand transfer, the integrase protein joins the previously processed 3' ends to the 5' ends of strands of target cellular DNA at the site of integration. The 5'-ends are produced by integrase-catalyzed staggered cuts, 5 bp apart. A Y-shaped, gapped, recombination intermediate results, with the 5'-ends of the viral DNA strands and the 3' ends of target DNA strands remaining unjoined, flanking a gap of 5 bp. The last step is viral DNA integration into host chromosome. This involves host DNA repair synthesis in which the 5 bp gaps between the unjoined strands are filled in and then ligated. Since this process occurs at both cuts flanking the HIV genome, a 5 bp duplication of host DNA is produced at the ends of HIV-1 integration. Alternatively, Integrase may catalyze the excision of viral DNA just after strand transfer, this is termed disintegration. This Human immunodeficiency virus type 1 group M subtype D (isolate ELI) (HIV-1) protein is Gag-Pol polyprotein (gag-pol).